The primary structure comprises 625 residues: ATP-dependent RNA helicase mrh4, mitochondrial (625 aa).

A mitochondrion-targeting transit peptide spans 1–16; that stretch reads MWKTARDSVCLICRSA. Low complexity predominate over residues 19 to 28; it reads TTTSTSARAS. Residues 19 to 119 are disordered; sequence TTTSTSARAS…DKNTKGQKAL (101 aa). A compositionally biased stretch (basic and acidic residues) spans 90–113; that stretch reads DPRKAPKPKPVEEDSRRDKRDKNT. Residues 144 to 177 carry the Q motif motif; sequence QAFDQFDLLPVVKEAIAQEALKGMTEIKPTPVQR. Residues 195–406 enclose the Helicase ATP-binding domain; the sequence is PKSDNGREEF…EEQFPYINRI (212 aa). Position 208–215 (208–215) interacts with ATP; sequence AETGSGKT. A DEAD box motif is present at residues 353 to 356; it reads DEAD. The 173-residue stretch at 453-625 folds into the Helicase C-terminal domain; that stretch reads EGPKSEIDVK…ESMFMGQALV (173 aa).

This sequence belongs to the DEAD box helicase family. MRH4 subfamily.

Its subcellular location is the mitochondrion. The enzyme catalyses ATP + H2O = ADP + phosphate + H(+). Functionally, ATP-binding RNA helicase involved in mitochondrial RNA metabolism. Required for maintenance of mitochondrial DNA. This is ATP-dependent RNA helicase mrh4, mitochondrial (drh-15) from Neurospora crassa (strain ATCC 24698 / 74-OR23-1A / CBS 708.71 / DSM 1257 / FGSC 987).